The chain runs to 652 residues: DNA ligase (652 aa).

NAD(+) contacts are provided by residues 29–33, 78–79, and E107; these read DAEYD and SL. The active-site N6-AMP-lysine intermediate is the K109. Residues R130, E164, K278, and K302 each coordinate NAD(+). Zn(2+)-binding residues include C395, C398, C413, and C418. One can recognise a BRCT domain in the interval 577 to 652; that stretch reads ASDAALTGMT…IKDEAWLESL (76 aa).

This sequence belongs to the NAD-dependent DNA ligase family. LigA subfamily. The cofactor is Mg(2+). It depends on Mn(2+) as a cofactor.

The enzyme catalyses NAD(+) + (deoxyribonucleotide)n-3'-hydroxyl + 5'-phospho-(deoxyribonucleotide)m = (deoxyribonucleotide)n+m + AMP + beta-nicotinamide D-nucleotide.. DNA ligase that catalyzes the formation of phosphodiester linkages between 5'-phosphoryl and 3'-hydroxyl groups in double-stranded DNA using NAD as a coenzyme and as the energy source for the reaction. It is essential for DNA replication and repair of damaged DNA. This chain is DNA ligase, found in Streptococcus mutans serotype c (strain ATCC 700610 / UA159).